The chain runs to 161 residues: Large ribosomal subunit protein uL15 (161 aa).

Residues 1–43 (MKLSDIADNAGSRKKRMRIGRGIGSGKGKTGGRGGKGQTARSG) are disordered. Residues 21–37 (RGIGSGKGKTGGRGGKG) are compositionally biased toward gly residues.

The protein belongs to the universal ribosomal protein uL15 family. In terms of assembly, part of the 50S ribosomal subunit.

Binds to the 23S rRNA. The sequence is that of Large ribosomal subunit protein uL15 from Nitrobacter hamburgensis (strain DSM 10229 / NCIMB 13809 / X14).